The sequence spans 343 residues: MKNLLDLSYEELVAEVTSLGLERYRADQILDWVFNKKVNNFDEMTNLSKQHRALLKEHFSIPFLKLLDKKVSRIDGTTKFLWELEDGNTIESVMLFHPDRITACISTQVGCPVKCIFCATGMSGFVRNLTTGEIVAQILSMEREEKKKIGNVVYMGMGEPLLNYENTIKSIRILNHKKMGNIGIRRITISTVGIPDRIIQLAEEGLDVKLALSLHAPTNFKRDQLVPLNKKYSIEEILNAVKIYQRKTGNRVTIEYVLIRGINDEISDAKKLAEILKNMKIFVNLIPVNPTAEDLKKPSRERLLAFKRILLENGIEAEIRREKGSDIEAACGQLRLKRIKSTS.

Glu-91 (proton acceptor) is an active-site residue. Positions His-97–Asp-326 constitute a Radical SAM core domain. Cys-104 and Cys-331 form a disulfide bridge. Positions 111, 115, and 118 each coordinate [4Fe-4S] cluster. Residues Gly-158–Glu-159, Ser-190, Ser-213–His-215, and Asn-289 each bind S-adenosyl-L-methionine. The active-site S-methylcysteine intermediate is Cys-331.

It belongs to the radical SAM superfamily. RlmN family. The cofactor is [4Fe-4S] cluster.

It localises to the cytoplasm. The enzyme catalyses adenosine(2503) in 23S rRNA + 2 reduced [2Fe-2S]-[ferredoxin] + 2 S-adenosyl-L-methionine = 2-methyladenosine(2503) in 23S rRNA + 5'-deoxyadenosine + L-methionine + 2 oxidized [2Fe-2S]-[ferredoxin] + S-adenosyl-L-homocysteine. It carries out the reaction adenosine(37) in tRNA + 2 reduced [2Fe-2S]-[ferredoxin] + 2 S-adenosyl-L-methionine = 2-methyladenosine(37) in tRNA + 5'-deoxyadenosine + L-methionine + 2 oxidized [2Fe-2S]-[ferredoxin] + S-adenosyl-L-homocysteine. Its function is as follows. Specifically methylates position 2 of adenine 2503 in 23S rRNA and position 2 of adenine 37 in tRNAs. This Thermotoga sp. (strain RQ2) protein is Probable dual-specificity RNA methyltransferase RlmN.